A 315-amino-acid polypeptide reads, in one-letter code: Lipoyl synthase (315 aa).

[4Fe-4S] cluster-binding residues include Cys62, Cys67, Cys73, Cys88, Cys92, Cys95, and Ser302. The 218-residue stretch at 74–291 (FGKGTATFMI…ETEALRMGFR (218 aa)) folds into the Radical SAM core domain.

Belongs to the radical SAM superfamily. Lipoyl synthase family. It depends on [4Fe-4S] cluster as a cofactor.

The protein localises to the cytoplasm. The catalysed reaction is [[Fe-S] cluster scaffold protein carrying a second [4Fe-4S](2+) cluster] + N(6)-octanoyl-L-lysyl-[protein] + 2 oxidized [2Fe-2S]-[ferredoxin] + 2 S-adenosyl-L-methionine + 4 H(+) = [[Fe-S] cluster scaffold protein] + N(6)-[(R)-dihydrolipoyl]-L-lysyl-[protein] + 4 Fe(3+) + 2 hydrogen sulfide + 2 5'-deoxyadenosine + 2 L-methionine + 2 reduced [2Fe-2S]-[ferredoxin]. It participates in protein modification; protein lipoylation via endogenous pathway; protein N(6)-(lipoyl)lysine from octanoyl-[acyl-carrier-protein]: step 2/2. Catalyzes the radical-mediated insertion of two sulfur atoms into the C-6 and C-8 positions of the octanoyl moiety bound to the lipoyl domains of lipoate-dependent enzymes, thereby converting the octanoylated domains into lipoylated derivatives. This chain is Lipoyl synthase, found in Azoarcus sp. (strain BH72).